The chain runs to 122 residues: S-adenosylmethionine decarboxylase proenzyme (122 aa).

S63 (schiff-base intermediate with substrate; via pyruvic acid) is an active-site residue. S63 carries the post-translational modification Pyruvic acid (Ser); by autocatalysis. Catalysis depends on H68, which acts as the Proton acceptor; for processing activity. The active-site Proton donor; for catalytic activity is the C83.

It belongs to the prokaryotic AdoMetDC family. Type 1 subfamily. Heterotetramer of two alpha and two beta chains arranged as a dimer of alpha/beta heterodimers. Pyruvate is required as a cofactor. In terms of processing, is synthesized initially as an inactive proenzyme. Formation of the active enzyme involves a self-maturation process in which the active site pyruvoyl group is generated from an internal serine residue via an autocatalytic post-translational modification. Two non-identical subunits are generated from the proenzyme in this reaction, and the pyruvate is formed at the N-terminus of the alpha chain, which is derived from the carboxyl end of the proenzyme. The post-translation cleavage follows an unusual pathway, termed non-hydrolytic serinolysis, in which the side chain hydroxyl group of the serine supplies its oxygen atom to form the C-terminus of the beta chain, while the remainder of the serine residue undergoes an oxidative deamination to produce ammonia and the pyruvoyl group blocking the N-terminus of the alpha chain.

The enzyme catalyses S-adenosyl-L-methionine + H(+) = S-adenosyl 3-(methylsulfanyl)propylamine + CO2. It functions in the pathway amine and polyamine biosynthesis; S-adenosylmethioninamine biosynthesis; S-adenosylmethioninamine from S-adenosyl-L-methionine: step 1/1. Catalyzes the decarboxylation of S-adenosylmethionine to S-adenosylmethioninamine (dcAdoMet), the propylamine donor required for the synthesis of the polyamines spermine and spermidine from the diamine putrescine. The chain is S-adenosylmethionine decarboxylase proenzyme from Methanococcus vannielii (strain ATCC 35089 / DSM 1224 / JCM 13029 / OCM 148 / SB).